The chain runs to 627 residues: Phosphomethylpyrimidine synthase (627 aa).

The tract at residues 1-21 (MSVQSNKNLSESAQVDQQSIQ) is disordered. Residues N231, M260, Y289, H325, 345–347 (SRG), 386–389 (DGLR), and E425 each bind substrate. Residue H429 participates in Zn(2+) binding. Substrate is bound at residue Y452. H493 serves as a coordination point for Zn(2+). [4Fe-4S] cluster-binding residues include C573, C576, and C581.

Belongs to the ThiC family. In terms of assembly, homodimer. Requires [4Fe-4S] cluster as cofactor.

The enzyme catalyses 5-amino-1-(5-phospho-beta-D-ribosyl)imidazole + S-adenosyl-L-methionine = 4-amino-2-methyl-5-(phosphooxymethyl)pyrimidine + CO + 5'-deoxyadenosine + formate + L-methionine + 3 H(+). The protein operates within cofactor biosynthesis; thiamine diphosphate biosynthesis. In terms of biological role, catalyzes the synthesis of the hydroxymethylpyrimidine phosphate (HMP-P) moiety of thiamine from aminoimidazole ribotide (AIR) in a radical S-adenosyl-L-methionine (SAM)-dependent reaction. The sequence is that of Phosphomethylpyrimidine synthase from Stutzerimonas stutzeri (strain A1501) (Pseudomonas stutzeri).